The following is a 326-amino-acid chain: Nicotianamine synthase 2 (326 aa).

The protein belongs to the nicotianamine synthase (NAS)-like family. As to expression, expressed in roots.

It carries out the reaction 3 S-adenosyl-L-methionine = nicotianamine + 3 S-methyl-5'-thioadenosine + 3 H(+). Its function is as follows. Synthesizes nicotianamine, a polyamine that is the first intermediate in the synthesis of the phytosiderophores of the mugineic acid type found in gramineae which serve as a sensor for the physiological iron status within the plant, and/or might be involved in the transport of iron. This is Nicotianamine synthase 2 (NAS2) from Oryza sativa subsp. indica (Rice).